A 124-amino-acid polypeptide reads, in one-letter code: Small ribosomal subunit protein bS16 (124 aa).

Residues 82 to 124 (LAKRPARSNPTKAVPGKKAQERAAEAKQKAEDAAAAAAESAAE) are disordered. The segment covering 99–113 (KAQERAAEAKQKAED) has biased composition (basic and acidic residues). Low complexity predominate over residues 114–124 (AAAAAAESAAE).

Belongs to the bacterial ribosomal protein bS16 family.

This is Small ribosomal subunit protein bS16 from Sinorhizobium fredii (strain NBRC 101917 / NGR234).